Reading from the N-terminus, the 444-residue chain is C4-dicarboxylate transport protein (444 aa).

8 helical membrane-spanning segments follow: residues 19–39 (HLYF…HFYP), 55–75 (LVKM…IAGM), 90–110 (IYFL…SNIL), 161–181 (ILQV…VGDL), 199–219 (LVAI…AFTI), 230–250 (LAFL…VVLG), 343–363 (LLLV…AGFI), and 366–386 (AATL…ILGI).

Belongs to the dicarboxylate/amino acid:cation symporter (DAACS) (TC 2.A.23) family.

Its subcellular location is the cell inner membrane. Functionally, responsible for the transport of dicarboxylates such as succinate, fumarate, and malate from the periplasm across the membrane. The polypeptide is C4-dicarboxylate transport protein (Allorhizobium ampelinum (strain ATCC BAA-846 / DSM 112012 / S4) (Agrobacterium vitis (strain S4))).